The following is a 60-amino-acid chain: Large ribosomal subunit protein uL30 (60 aa).

Belongs to the universal ribosomal protein uL30 family. In terms of assembly, part of the 50S ribosomal subunit.

The sequence is that of Large ribosomal subunit protein uL30 from Albidiferax ferrireducens (strain ATCC BAA-621 / DSM 15236 / T118) (Rhodoferax ferrireducens).